The primary structure comprises 331 residues: Anthranilate phosphoribosyltransferase (331 aa).

5-phospho-alpha-D-ribose 1-diphosphate-binding positions include Gly79, 82-83 (GD), Thr87, 89-92 (NVST), 107-115 (KHGNYGVSS), and Ser119. Gly79 contacts anthranilate. Ser91 contributes to the Mg(2+) binding site. Asn110 is a binding site for anthranilate. Position 165 (Arg165) interacts with anthranilate. Residues Asp223 and Glu224 each coordinate Mg(2+).

The protein belongs to the anthranilate phosphoribosyltransferase family. Homodimer. It depends on Mg(2+) as a cofactor.

The catalysed reaction is N-(5-phospho-beta-D-ribosyl)anthranilate + diphosphate = 5-phospho-alpha-D-ribose 1-diphosphate + anthranilate. The protein operates within amino-acid biosynthesis; L-tryptophan biosynthesis; L-tryptophan from chorismate: step 2/5. Functionally, catalyzes the transfer of the phosphoribosyl group of 5-phosphorylribose-1-pyrophosphate (PRPP) to anthranilate to yield N-(5'-phosphoribosyl)-anthranilate (PRA). This Christiangramia forsetii (strain DSM 17595 / CGMCC 1.15422 / KT0803) (Gramella forsetii) protein is Anthranilate phosphoribosyltransferase.